The primary structure comprises 188 residues: Pyridoxal 5'-phosphate synthase subunit PdxT (188 aa).

Position 47–49 (47–49) interacts with L-glutamine; that stretch reads GES. Cysteine 79 functions as the Nucleophile in the catalytic mechanism. Residues arginine 105 and 134–135 each bind L-glutamine; that span reads IR. Active-site charge relay system residues include histidine 170 and glutamate 172.

It belongs to the glutaminase PdxT/SNO family. In the presence of PdxS, forms a dodecamer of heterodimers. Only shows activity in the heterodimer.

It catalyses the reaction aldehydo-D-ribose 5-phosphate + D-glyceraldehyde 3-phosphate + L-glutamine = pyridoxal 5'-phosphate + L-glutamate + phosphate + 3 H2O + H(+). The enzyme catalyses L-glutamine + H2O = L-glutamate + NH4(+). Its pathway is cofactor biosynthesis; pyridoxal 5'-phosphate biosynthesis. In terms of biological role, catalyzes the hydrolysis of glutamine to glutamate and ammonia as part of the biosynthesis of pyridoxal 5'-phosphate. The resulting ammonia molecule is channeled to the active site of PdxS. The protein is Pyridoxal 5'-phosphate synthase subunit PdxT of Listeria monocytogenes serotype 4a (strain HCC23).